The sequence spans 337 residues: Viral cathepsin (337 aa).

The N-terminal stretch at 1-19 is a signal peptide; the sequence is MTLLMIFTILLVASSQIEG. A propeptide spans 20 to 126 (activation peptide); the sequence is HLKFDIHDAQ…DAPPDVHDEL (107 aa). Intrachain disulfides connect Cys147–Cys188, Cys181–Cys221, and Cys276–Cys324. Residue Cys150 is part of the active site. A glycan (N-linked (GlcNAc...) asparagine; by host) is linked at Asn172. Catalysis depends on residues His283 and Asn303.

This sequence belongs to the peptidase C1 family. In terms of processing, synthesized as an inactive proenzyme and activated by proteolytic removal of the inhibitory propeptide.

It catalyses the reaction Endopeptidase of broad specificity, hydrolyzing substrates of both cathepsin L and cathepsin B.. Cysteine protease that plays an essential role in host liquefaction to facilitate horizontal transmission of the virus. May participate in the degradation of foreign protein expressed by the baculovirus system. The sequence is that of Viral cathepsin (VCATH) from Adoxophyes honmai (Smaller tea tortrix moth).